The chain runs to 446 residues: BAG family molecular chaperone regulator 7 (446 aa).

The tract at residues 230-252 (TGGEKKKKHEEKEKKEKIETKSK) is disordered. The span at 239–250 (EEKEKKEKIETK) shows a compositional bias: basic and acidic residues. The 30-residue stretch at 303-332 (PEYAAVMIQRAFKAYLIRRSKSLRALRDLA) folds into the IQ domain. Residues 330-407 (DLAIAKTKLK…AMLDVVDPQP (78 aa)) enclose the BAG domain. Thr443 bears the Phosphothreonine mark.

As to quaternary structure, binds to the ATPase domain of HSP70/HSC70 chaperones. Interacts with HSP70-11/BIP2.

It is found in the endoplasmic reticulum. In terms of biological role, co-chaperone that regulates diverse cellular pathways, such as programmed cell death and stress responses. Necessary for the proper maintenance of the unfolded protein response (UPR) during heat and cold tolerance. The sequence is that of BAG family molecular chaperone regulator 7 (BAG7) from Arabidopsis thaliana (Mouse-ear cress).